The primary structure comprises 136 residues: ATP synthase epsilon chain (136 aa).

The protein belongs to the ATPase epsilon chain family. F-type ATPases have 2 components, CF(1) - the catalytic core - and CF(0) - the membrane proton channel. CF(1) has five subunits: alpha(3), beta(3), gamma(1), delta(1), epsilon(1). CF(0) has three main subunits: a, b and c.

The protein localises to the cell membrane. In terms of biological role, produces ATP from ADP in the presence of a proton gradient across the membrane. The polypeptide is ATP synthase epsilon chain (Ureaplasma urealyticum serovar 10 (strain ATCC 33699 / Western)).